Reading from the N-terminus, the 226-residue chain is ATP synthase subunit a (226 aa).

The next 5 membrane-spanning stretches (helical) occupy residues 17 to 37, 79 to 99, 105 to 125, 168 to 188, and 200 to 222; these read FNYL…AKLA, LVAT…IPGF, SLNL…FEGI, FGNI…APWV, and MALL…AVVV.

This sequence belongs to the ATPase A chain family. F-type ATPases have 2 components, CF(1) - the catalytic core - and CF(0) - the membrane proton channel. CF(1) has five subunits: alpha(3), beta(3), gamma(1), delta(1), epsilon(1). CF(0) has three main subunits: a(1), b(2) and c(9-12). The alpha and beta chains form an alternating ring which encloses part of the gamma chain. CF(1) is attached to CF(0) by a central stalk formed by the gamma and epsilon chains, while a peripheral stalk is formed by the delta and b chains.

The protein localises to the cell inner membrane. Its function is as follows. Key component of the proton channel; it plays a direct role in the translocation of protons across the membrane. The chain is ATP synthase subunit a from Campylobacter fetus subsp. fetus (strain 82-40).